We begin with the raw amino-acid sequence, 606 residues long: MLRTHLAGELRKEMAGETVTLTGWVARRRDHGGVIFIDLRDRSGVAQVVFRESEVAERAHDLRSEYCVKVTGVVEPRPEGSANANLASGEIEVNVSDLEVLNKSAALPFQIDDPSSSGEVGEETRLKYRYLDLRRERQHEALRLRSAANRAAREVLDSHDFTEIETPTLTRSTPEGARDFLVPARLKPGSWYALPQSPQLFKQLLMVAGMERYYQIARCYRDEDFRADRQPEFTQLDVEMSFVDQDDVIALAEEIVSALWKLIGYEIKTPIPRMTYADAMKYYGSDKPDLRFDIKIVECTEFFKDTTFRVFQNEYVGAVVMEGGASQPRRQFDAWQEWAKQRGAKGLAYITIAEDGTLGGPVAKNITDAEREGIAEHVGAKPGDAIFFAAGDVKSSRALLGAARGEIAKKLDLIKDGDWAFTWVVDAPLFEPAADATASGDVALGHSKWTAVHHAFTSPKPEYLDSFDENPGEALAYAYDIVCNGNEIGGGSIRIHDQDVQKRVFDVMGIGEEEAQEKFGFLLDAFQFGAPPHGGIAFGWDRIVSLLGGFDSIRDVIAFPKSGGGVDPLTDAPGTIPAEQRKETGVDFKPEKAAKAAQGEKAGKES.

E175 contacts L-aspartate. Residues 199–202 form an aspartate region; the sequence is QLFK. R221 provides a ligand contact to L-aspartate. Residues 221–223 and Q230 each bind ATP; that span reads RDE. H453 contacts L-aspartate. E487 is a binding site for ATP. R494 provides a ligand contact to L-aspartate. ATP is bound at residue 539-542; the sequence is GWDR. The interval 564–606 is disordered; it reads GGVDPLTDAPGTIPAEQRKETGVDFKPEKAAKAAQGEKAGKES. Over residues 579 to 594 the composition is skewed to basic and acidic residues; it reads EQRKETGVDFKPEKAA.

It belongs to the class-II aminoacyl-tRNA synthetase family. Type 1 subfamily. Homodimer.

Its subcellular location is the cytoplasm. The catalysed reaction is tRNA(Asx) + L-aspartate + ATP = L-aspartyl-tRNA(Asx) + AMP + diphosphate. Its function is as follows. Aspartyl-tRNA synthetase with relaxed tRNA specificity since it is able to aspartylate not only its cognate tRNA(Asp) but also tRNA(Asn). Reaction proceeds in two steps: L-aspartate is first activated by ATP to form Asp-AMP and then transferred to the acceptor end of tRNA(Asp/Asn). This is Aspartate--tRNA(Asp/Asn) ligase from Corynebacterium aurimucosum (strain ATCC 700975 / DSM 44827 / CIP 107346 / CN-1) (Corynebacterium nigricans).